The chain runs to 717 residues: P-loop NTPase domain-containing protein LPA1 homolog 2 (717 aa).

Disordered stretches follow at residues 235 to 259 (KKLK…SSTT) and 532 to 629 (HYSS…DTIS). Composition is skewed to polar residues over residues 243-259 (VNSN…SSTT) and 532-545 (HYSS…TSDG). The span at 559-582 (SDEDDEEGDDDFHEPDSDEDLSDN) shows a compositional bias: acidic residues. Residues 583–602 (NDERNRDEIGSVDEESTKSD) show a composition bias toward basic and acidic residues.

Functionally, may be not required for the accumulation of phytic acid in seeds. Phytic acid is the primary storage form of phosphorus in cereal grains and other plant seeds. This chain is P-loop NTPase domain-containing protein LPA1 homolog 2, found in Arabidopsis thaliana (Mouse-ear cress).